Reading from the N-terminus, the 318-residue chain is MFLVNLLLMIIPILLAVAFLTLLERKTLGYMQLRKGPNIVGPHGLLQPIADAIKLFTKEPLRPLTSSTSMFIMAPILALSLALTMWTPLPMPYPLINMNLGVLFILAMSSLAVYSILWSGWASNSKYALIGALRAVAQTISYEVTLAIILLSVLLMSGSFSLPNLSTTQENLWLIIPAWPLAMMWFISTLAETNRAPFDLTEGESELVSGFNVEYAGGSFALFFLAEYANIIMMNAITTTLFLGLYQNPSLPEFYTTSFMIKTLLMTITFLWIRASYPRFRYDQLMHLLWKNFLPLTLALCMWHVSIPILTASIPPQT.

8 consecutive transmembrane segments (helical) span residues 2-22 (FLVN…FLTL), 70-90 (MFIM…TPLP), 100-120 (LGVL…LWSG), 140-160 (ISYE…SGSF), 172-192 (LWLI…TLAE), 217-237 (GGSF…MNAI), 253-273 (EFYT…FLWI), and 294-314 (LPLT…TASI).

This sequence belongs to the complex I subunit 1 family. As to quaternary structure, core subunit of respiratory chain NADH dehydrogenase (Complex I) which is composed of 45 different subunits.

It localises to the mitochondrion inner membrane. It catalyses the reaction a ubiquinone + NADH + 5 H(+)(in) = a ubiquinol + NAD(+) + 4 H(+)(out). Core subunit of the mitochondrial membrane respiratory chain NADH dehydrogenase (Complex I) which catalyzes electron transfer from NADH through the respiratory chain, using ubiquinone as an electron acceptor. Essential for the catalytic activity and assembly of complex I. The protein is NADH-ubiquinone oxidoreductase chain 1 (MT-ND1) of Emballonura alecto (Philippine sheath-tailed bat).